Consider the following 378-residue polypeptide: Probable pectin lyase C (378 aa).

Residues 1–18 (MKVPFLQLLCLNAALASA) form the signal peptide. Cystine bridges form between Cys81-Cys100 and Cys90-Cys220. Asn123 is a glycosylation site (N-linked (GlcNAc...) asparagine). Arg250 is an active-site residue. A disulfide bridge links Cys316 with Cys324.

It belongs to the polysaccharide lyase 1 family.

It localises to the secreted. It carries out the reaction Eliminative cleavage of (1-&gt;4)-alpha-D-galacturonan methyl ester to give oligosaccharides with 4-deoxy-6-O-methyl-alpha-D-galact-4-enuronosyl groups at their non-reducing ends.. Functionally, pectinolytic enzymes consist of four classes of enzymes: pectin lyase, polygalacturonase, pectin methylesterase and rhamnogalacturonase. Among pectinolytic enzymes, pectin lyase is the most important in depolymerization of pectin, since it cleaves internal glycosidic bonds of highly methylated pectins. This Aspergillus niger protein is Probable pectin lyase C (pelC).